A 288-amino-acid polypeptide reads, in one-letter code: Cyclin-dependent kinase 2 homolog (288 aa).

In terms of domain architecture, Protein kinase spans 4-284; sequence YHGLEKIGEG…AKQALEHAYF (281 aa). ATP is bound by residues 10 to 18 and lysine 32; that span reads IGEGTYGVV. Position 14 is a phosphothreonine (threonine 14). Residue tyrosine 15 is modified to Phosphotyrosine. Catalysis depends on aspartate 125, which acts as the Proton acceptor. Threonine 158 is subject to Phosphothreonine.

It belongs to the protein kinase superfamily. CMGC Ser/Thr protein kinase family. CDC2/CDKX subfamily. In terms of assembly, may form a complex composed of at least the catalytic subunit CRK2 and a cyclin. Mg(2+) serves as cofactor.

It is found in the cytoplasm. It carries out the reaction L-seryl-[protein] + ATP = O-phospho-L-seryl-[protein] + ADP + H(+). It catalyses the reaction L-threonyl-[protein] + ATP = O-phospho-L-threonyl-[protein] + ADP + H(+). The catalysed reaction is [DNA-directed RNA polymerase] + ATP = phospho-[DNA-directed RNA polymerase] + ADP + H(+). Phosphorylation at Thr-14 or Tyr-15 inactivates the enzyme, while phosphorylation at Thr-158 activates it. Its function is as follows. Serine/threonine-protein kinase. Involved in the control of the cell cycle. Required for entry into S-phase and mitosis. Probable component of the kinase complex that phosphorylates the repetitive C-terminus of RNA polymerase II. This is Cyclin-dependent kinase 2 homolog from Plasmodium vivax.